Reading from the N-terminus, the 1710-residue chain is Protein NETWORKED 1B (1710 aa).

One can recognise an NAB domain in the interval 13–92 (YSWWWDSHIP…ERYDHTTVEL (80 aa)). Residues 113–159 (EDSASSSSEPRTEADTEALQKDGTKSKRSFSQMNKLDGTSDSHEADS) are disordered. Composition is skewed to basic and acidic residues over residues 122–137 (PRTE…DGTK) and 150–159 (GTSDSHEADS). 6 coiled-coil regions span residues 152–446 (SDSH…ELGA), 474–546 (QMLR…EIHC), 579–883 (VKKL…IDSL), 974–1021 (HQCG…FESL), 1095–1259 (VSSL…LQEK), and 1285–1336 (LILE…LSAY). A disordered region spans residues 1409-1448 (RLSRQITRSTSQKRRDRRKIENIQPDDQVTGESRQPRLRP). A coiled-coil region spans residues 1559–1665 (RRLSSLRISL…VLKLEDGTKS (107 aa)).

It belongs to the NET family. As to expression, expressed in root meristems and at very low levels throughout mature vasculature.

Its function is as follows. Plant-specific actin binding protein. May be part of a membrane-cytoskeletal adapter complex. The protein is Protein NETWORKED 1B of Arabidopsis thaliana (Mouse-ear cress).